A 365-amino-acid polypeptide reads, in one-letter code: tRNA 2-selenouridine synthase (365 aa).

The region spanning 16 to 138 is the Rhodanese domain; sequence FLLKTPLIDL…LRRYLINVID (123 aa). Cys98 functions as the S-selanylcysteine intermediate in the catalytic mechanism.

This sequence belongs to the SelU family. As to quaternary structure, monomer.

The enzyme catalyses 5-methylaminomethyl-2-thiouridine(34) in tRNA + selenophosphate + (2E)-geranyl diphosphate + H2O + H(+) = 5-methylaminomethyl-2-selenouridine(34) in tRNA + (2E)-thiogeraniol + phosphate + diphosphate. It carries out the reaction 5-methylaminomethyl-2-thiouridine(34) in tRNA + (2E)-geranyl diphosphate = 5-methylaminomethyl-S-(2E)-geranyl-thiouridine(34) in tRNA + diphosphate. It catalyses the reaction 5-methylaminomethyl-S-(2E)-geranyl-thiouridine(34) in tRNA + selenophosphate + H(+) = 5-methylaminomethyl-2-(Se-phospho)selenouridine(34) in tRNA + (2E)-thiogeraniol. The catalysed reaction is 5-methylaminomethyl-2-(Se-phospho)selenouridine(34) in tRNA + H2O = 5-methylaminomethyl-2-selenouridine(34) in tRNA + phosphate. Functionally, involved in the post-transcriptional modification of the uridine at the wobble position (U34) of tRNA(Lys), tRNA(Glu) and tRNA(Gln). Catalyzes the conversion of 2-thiouridine (S2U-RNA) to 2-selenouridine (Se2U-RNA). Acts in a two-step process involving geranylation of 2-thiouridine (S2U) to S-geranyl-2-thiouridine (geS2U) and subsequent selenation of the latter derivative to 2-selenouridine (Se2U) in the tRNA chain. The polypeptide is tRNA 2-selenouridine synthase (Psychromonas ingrahamii (strain DSM 17664 / CCUG 51855 / 37)).